The sequence spans 434 residues: Glutamine synthetase leaf isozyme, chloroplastic (434 aa).

Disordered stretches follow at residues 1-33 and 101-126; these read MQVR…ARQP and TISK…GQAP. The transit peptide at 1-54 directs the protein to the chloroplast; sequence MQVRRDDDGAGGCAGDAVPGGGEGQDGVPARQPAGRVWGVSRAARATSGFKVLA. Residues 10 to 25 show a composition bias toward gly residues; the sequence is AGGCAGDAVPGGGEGQ. Residues 81–161 enclose the GS beta-grasp domain; that stretch reads IIAEYIWVGG…VICDTYTPQG (81 aa). The region spanning 168 to 434 is the GS catalytic domain; the sequence is KRHMAAQIFS…LAAKKLALKV (267 aa).

Belongs to the glutamine synthetase family. Homooctamer.

It localises to the plastid. The protein resides in the chloroplast. It carries out the reaction L-glutamate + NH4(+) + ATP = L-glutamine + ADP + phosphate + H(+). Its function is as follows. The light-modulated chloroplast enzyme, encoded by a nuclear gene and expressed primarily in leaves, is responsible for the reassimilation of the ammonia generated by photorespiration. The sequence is that of Glutamine synthetase leaf isozyme, chloroplastic from Hordeum vulgare (Barley).